The following is a 241-amino-acid chain: MORN repeat-containing protein 3 (241 aa).

An interaction with MDM2 region spans residues 6–35; sequence CPQKSEPLWKEWDQKAQKNGLRHQVFAVNG. 7 MORN repeats span residues 38–60, 62–84, 91–113, 114–136, 137–159, 160–182, and 184–205; these read YVGE…KNGA, YEGD…DQET, YSGW…PKEY, YEGD…NGDI, YEGQ…NGNR, YEGN…DHGQ, and FEGF…GRDE. An interaction with SIRT1 region spans residues 76–100; that stretch reads TLSLPDQETGKYKRAYSGWWKGDKK. The tract at residues 206-240 is interaction with TP53; the sequence is APQPTQFPIPEVKILDPDGVLEEALAMFKKTKEEG.

Interacts with MEIG1. Interacts with TP53, MDM2 and SIRT1; the interactions mediate post-transcriptional modifications of TP53 by MDM2 and SIRT1.

It localises to the cytoplasmic vesicle. Its subcellular location is the secretory vesicle. It is found in the acrosome. In terms of biological role, assembles a suppression complex (suppresome) by tethering SIRT1 and MDM2 to regulate composite modifications of p53/TP53. Confers both deacetylation-mediated functional inactivation, by SIRT1, and ubiquitination-dependent degradation, by MDM2, of p53/TP53, promoting a proliferative and cell survival behaviors. May play a role in the regulation of spermatogenesis. This Bos taurus (Bovine) protein is MORN repeat-containing protein 3 (MORN3).